A 238-amino-acid polypeptide reads, in one-letter code: MIVCLDSGNTRIKWGVHDGVKWLAQGAVAHAEVGALSRLVAEWPLPEKVMLANVAGVEAGSRIREQLAAWAPVFHEVRPELRRCGVTNLYKSPERLGVDRWCALLGARSLVDSATVVVMAGTATTIDTLDADGNFLGGVIMPGIGLMLRSLAHGTAALPFADGEYATYPRCTDDAIVTGVIDAQAGAIERIFSRLDDPAASCLLSGGYAEQIAVHLVVRHRLADNLPLEGLRHLALKS.

6–13 (DSGNTRIK) contacts ATP. Residues tyrosine 90 and 97 to 100 (GVDR) contribute to the substrate site. The active-site Proton acceptor is the aspartate 99. ATP is bound at residue threonine 122. Threonine 172 contributes to the substrate binding site.

Belongs to the type III pantothenate kinase family. As to quaternary structure, homodimer. NH4(+) is required as a cofactor. The cofactor is K(+).

The protein resides in the cytoplasm. It carries out the reaction (R)-pantothenate + ATP = (R)-4'-phosphopantothenate + ADP + H(+). Its pathway is cofactor biosynthesis; coenzyme A biosynthesis; CoA from (R)-pantothenate: step 1/5. Its function is as follows. Catalyzes the phosphorylation of pantothenate (Pan), the first step in CoA biosynthesis. The sequence is that of Type III pantothenate kinase from Dechloromonas aromatica (strain RCB).